The sequence spans 60 residues: Large ribosomal subunit protein bL32 (60 aa).

Residues 1-60 (MAVQQNKKSRSARDMRRSHDALESNALSVEKSTGEVHLRHHVSPDGFYRGRKVVDKGSDE) are disordered. A compositionally biased stretch (basic and acidic residues) spans 11 to 22 (SARDMRRSHDAL).

The protein belongs to the bacterial ribosomal protein bL32 family.

The chain is Large ribosomal subunit protein bL32 from Pseudomonas aeruginosa (strain LESB58).